A 276-amino-acid polypeptide reads, in one-letter code: Secreted RxLR effector protein 150 (276 aa).

A signal peptide spans 1–18 (MRNIAFLIGLFFIGYSSC). Residues 49-64 (RTLQADDRERILAEER) carry the RxLR-dEER motif.

Belongs to the RxLR effector family.

It localises to the secreted. It is found in the host nucleus. The protein resides in the host cytoplasm. Functionally, secreted effector that partially suppresses the host cell death induced by cell death-inducing proteins. The protein is Secreted RxLR effector protein 150 of Plasmopara viticola (Downy mildew of grapevine).